The sequence spans 1687 residues: Gag-Pol polyprotein (1687 aa).

G2 is lipidated: N-myristoyl glycine; by host. Disordered regions lie at residues 107 to 126 (GQDN…SRLP), 136 to 195 (LLSE…STVA), 420 to 447 (HKRE…DRRQ), and 466 to 485 (GRQA…EGRP). The PTAP/PSAP motif signature appears at 108 to 111 (QDNG). Pro residues predominate over residues 139-153 (EPPPYPTSPPPPPAP). Residues 140–143 (PPPY) carry the PPXY motif motif. Positions 408–453 (LQDLIKEAEKVYHKRETEEEKQEREKKETEERERRRDRRQEKNLTK) form a coiled coil. The segment at 490–507 (DQCAYCKERGHWARECPR) adopts a CCHC-type zinc-finger fold. In terms of domain architecture, Peptidase A2 spans 544–614 (TEFLVDTGAE…CPAPLLGRDL (71 aa)). D549 (protease; shared with dimeric partner) is an active-site residue. A Reverse transcriptase domain is found at 721–912 (LDLGILVPCQ…EEVTYLGYLL (192 aa)). Mg(2+)-binding residues include D789, D863, D864, D1162, E1200, D1221, and D1291. Positions 1153 to 1299 (LPGVPAWYTD…ADEAAKQAAQ (147 aa)) constitute an RNase H type-1 domain. Residues 1339 to 1377 (HQLTHLGPDKLLQLVGRTSFHIPNLQSVVREITSKCQVC) form an HHCC-type zinc finger. Positions 1394-1552 (RGDRPGVYWE…TPYEILHGGP (159 aa)) constitute an Integrase catalytic domain. The Mg(2+) site is built by D1405 and D1464.

In terms of assembly, homohexamer; further associates as homomultimer. The virus core is composed of a lattice formed from hexagonal rings, each containing six capsid monomers. As to quaternary structure, interacts (via PPXY motif) with host NEDD4. Interacts (via PSAP motif) with host TSG101. The reverse transcriptase is a monomer (Potential). Interacts (via RNase domains) with host release factor ETF1; this interaction is essential for translational readthrough of amber codon between viral gag and pol genes, as well as for viral replication. In terms of assembly, homodimer. The cofactor is Mg(2+). Post-translationally, specific enzymatic cleavages by the viral protease yield mature proteins. The protease is released by autocatalytic cleavage. The polyprotein is cleaved during and after budding, this process is termed maturation. In terms of processing, phosphorylated on serine residues.

It is found in the virion. The protein localises to the host cell membrane. It localises to the host late endosome membrane. Its subcellular location is the host endosome. The protein resides in the host multivesicular body. It is found in the host cytoplasm. The catalysed reaction is DNA(n) + a 2'-deoxyribonucleoside 5'-triphosphate = DNA(n+1) + diphosphate. The enzyme catalyses Endonucleolytic cleavage to 5'-phosphomonoester.. With respect to regulation, protease: Most efficiently inhibited by Amprenavir, which is able to block Gag-Pol processing in infected cells. Its function is as follows. Plays a role in budding and is processed by the viral protease during virion maturation outside the cell. During budding, it recruits, in a PPXY-dependent or independent manner, Nedd4-like ubiquitin ligases that conjugate ubiquitin molecules to Gag-Pol, or to Gag-Pol binding host factors. Interaction with HECT ubiquitin ligases probably links the viral protein to the host ESCRT pathway and facilitates release. Functionally, targets Gag and gag-pol polyproteins to the plasma membrane via a multipartite membrane binding signal, that includes its myristoylated N-terminus. Also mediates nuclear localization of the pre-integration complex. In terms of biological role, constituent of the pre-integration complex (PIC) which tethers the latter to mitotic chromosomes. This allows the integration of the viral genome into the host DNA. Forms the spherical core of the virion that encapsulates the genomic RNA-nucleocapsid complex. Its function is as follows. Involved in the packaging and encapsidation of two copies of the genome. Binds with high affinity to conserved UCUG elements within the packaging signal, located near the 5'-end of the genome. This binding is dependent on genome dimerization. Acts as a nucleic acid chaperone which is involved in rearrangement of nucleic acid secondary structures during gRNA retrotranscription. Functionally, protease: The aspartyl protease mediates proteolytic cleavages of Gag and Gag-Pol polyproteins during or shortly after the release of the virion from the plasma membrane. Cleavages take place as an ordered, step-wise cascade to yield mature proteins. This process is called maturation. Displays maximal activity during the budding process just prior to particle release from the cell. In terms of biological role, reverse transcriptase/ribonuclease H: RT is a multifunctional enzyme that converts the viral dimeric RNA genome into dsDNA in the cytoplasm, shortly after virus entry into the cell. This enzyme displays a DNA polymerase activity that can copy either DNA or RNA templates, and a ribonuclease H (RNase H) activity that cleaves the RNA strand of RNA-DNA heteroduplexes in a partially processive 3' to 5' endonucleasic mode. Conversion of viral genomic RNA into dsDNA requires many steps. A tRNA binds to the primer-binding site (PBS) situated at the 5' end of the viral RNA. RT uses the 3' end of the tRNA primer to perform a short round of RNA-dependent minus-strand DNA synthesis. The reading proceeds through the U5 region and ends after the repeated (R) region which is present at both ends of viral RNA. The portion of the RNA-DNA heteroduplex is digested by the RNase H, resulting in a ssDNA product attached to the tRNA primer. This ssDNA/tRNA hybridizes with the identical R region situated at the 3' end of viral RNA. This template exchange, known as minus-strand DNA strong stop transfer, can be either intra- or intermolecular. RT uses the 3' end of this newly synthesized short ssDNA to perform the RNA-dependent minus-strand DNA synthesis of the whole template. RNase H digests the RNA template except for a polypurine tract (PPT) situated at the 5' end of the genome. It is not clear if both polymerase and RNase H activities are simultaneous. RNase H probably can proceed both in a polymerase-dependent (RNA cut into small fragments by the same RT performing DNA synthesis) and a polymerase-independent mode (cleavage of remaining RNA fragments by free RTs). Secondly, RT performs DNA-directed plus-strand DNA synthesis using the PPT that has not been removed by RNase H as primers. PPT and tRNA primers are then removed by RNase H. The 3' and 5' ssDNA PBS regions hybridize to form a circular dsDNA intermediate. Strand displacement synthesis by RT to the PBS and PPT ends produces a blunt ended, linear dsDNA copy of the viral genome that includes long terminal repeats (LTRs) at both ends. Catalyzes viral DNA integration into the host chromosome, by performing a series of DNA cutting and joining reactions. This enzyme activity takes place after virion entry into a cell and reverse transcription of the RNA genome in dsDNA. The first step in the integration process is 3' processing. This step requires a complex comprising the viral genome, matrix protein and integrase. This complex is called the pre-integration complex (PIC). The integrase protein removes 2 nucleotides from each 3' end of the viral DNA, leaving recessed CA OH's at the 3' ends. In the second step that requires cell division, the PIC enters cell nucleus. In the third step, termed strand transfer, the integrase protein joins the previously processed 3' ends to the 5' ends of strands of target cellular DNA at the site of integration. The last step is viral DNA integration into host chromosome. This Phascolarctos cinereus (Koala) protein is Gag-Pol polyprotein (pro-pol).